Consider the following 451-residue polypeptide: MSQLYASLFYQRDVTEIFSDRALVSYMVEAEVALAQAQAQVGVIPQSAATVIERAAKTAIDKIDFDALATATGLAGNIAIPFVKQLTAIVKDADEDAARYVHWGATSQDILDTACILQCRDALAIVQNQVQQCYETALSQAQTYRHQVMMGRTWLQQALPITLGHKLARWASAFKRDLDRINAIKARVLVAQLGGAVGSLASLQDQGSIVVEAYAKQLKLGQTACTWHGERDRIVEIASVLGIITGNVGKMARDWSLMMQTEIAEVFEPTAKGRGGSSTMPHKRNPVAAASVLAAANRVPALMSSIYQSMVQEHERSLGAWHAEWLSLPEIFQLTAGALERTLDVLKGMEVNAENMHQNIECTHGLIMAEAVMMALAPHMGRLNAHHVVEAACKTAVAEQKHLKDIISQVDEVKQYFNPSQLDEIFKPESYLGNIQDQIDAVLQEAKGEAK.

It belongs to the class-II fumarase/aspartase family. In terms of assembly, homotetramer.

It catalyses the reaction 2-(carboxymethyl)-5-oxo-2,5-dihydro-2-furoate = 3-carboxy-cis,cis-muconate + H(+). It participates in aromatic compound metabolism; beta-ketoadipate pathway; 5-oxo-4,5-dihydro-2-furylacetate from 3-carboxy-cis,cis-muconate: step 1/2. Functionally, catalyzes an anti cycloisomerization. The protein is 3-carboxy-cis,cis-muconate cycloisomerase (pcaB) of Acinetobacter baylyi (strain ATCC 33305 / BD413 / ADP1).